Consider the following 126-residue polypeptide: Holo-[acyl-carrier-protein] synthase (126 aa).

Positions 9 and 58 each coordinate Mg(2+).

The protein belongs to the P-Pant transferase superfamily. AcpS family. Requires Mg(2+) as cofactor.

The protein localises to the cytoplasm. The enzyme catalyses apo-[ACP] + CoA = holo-[ACP] + adenosine 3',5'-bisphosphate + H(+). Functionally, transfers the 4'-phosphopantetheine moiety from coenzyme A to a Ser of acyl-carrier-protein. This chain is Holo-[acyl-carrier-protein] synthase, found in Klebsiella pneumoniae subsp. pneumoniae (strain ATCC 700721 / MGH 78578).